Reading from the N-terminus, the 521-residue chain is Forkhead box protein N4 (521 aa).

Positions 197 to 293 (KPIYSYSCLI…EEMHKWKRKD (97 aa)) form a DNA-binding region, fork-head. The interval 371-406 (PQAHLAPDSPAPAQTPPLHALPSLSPGPLPQPAMGR) is disordered.

Mainly expressed in proliferator progenitor cells in brain and retina rather than differentiated cells. In contrast, is expressed only in postmitotic epithelial cells rather than in proliferative progenitors in the proximal airway.

It localises to the nucleus. Functionally, transcription factor essential for neural and some non-neural tissues development, such as retina and lung respectively. Binds to an 11-bp consensus sequence containing the invariant tetranucleotide 5'-ACGC-3'. During development of the central nervous system, is required to specify the amacrine and horizontal cell fates from multipotent retinal progenitors while suppressing the alternative photoreceptor cell fates through activating DLL4-NOTCH signaling. Also acts synergistically with ASCL1/MASH1 to activate DLL4-NOTCH signaling and drive commitment of p2 progenitors to the V2b interneuron fates during spinal cord neurogenesis. In development of non-neural tissues, plays an essential role in the specification of the atrioventricular canal and is indirectly required for patterning the distal airway during lung development. The polypeptide is Forkhead box protein N4 (Foxn4) (Mus musculus (Mouse)).